Here is a 273-residue protein sequence, read N- to C-terminus: tRNA pseudouridine synthase A (273 aa).

Asp-52 (nucleophile) is an active-site residue. Tyr-110 lines the substrate pocket.

It belongs to the tRNA pseudouridine synthase TruA family. As to quaternary structure, homodimer.

The enzyme catalyses uridine(38/39/40) in tRNA = pseudouridine(38/39/40) in tRNA. Functionally, formation of pseudouridine at positions 38, 39 and 40 in the anticodon stem and loop of transfer RNAs. The protein is tRNA pseudouridine synthase A of Cupriavidus pinatubonensis (strain JMP 134 / LMG 1197) (Cupriavidus necator (strain JMP 134)).